Consider the following 322-residue polypeptide: NAD(P)H-dependent D-xylose reductase (322 aa).

Y52 (proton donor) is an active-site residue. Residue H114 participates in substrate binding. Residues 169-170, 218-227, and 274-284 each bind NAD(+); these read SN, SSFGPQSFVE, and KSNLPERLVQN.

Belongs to the aldo/keto reductase family. In terms of assembly, homodimer.

It carries out the reaction xylitol + NAD(+) = D-xylose + NADH + H(+). It catalyses the reaction xylitol + NADP(+) = D-xylose + NADPH + H(+). It functions in the pathway carbohydrate metabolism; D-xylose degradation. Functionally, reduces D-xylose into xylitol. Has a preference for NADPH, but can also utilize NADH as cosubstrate. The polypeptide is NAD(P)H-dependent D-xylose reductase (XYL1) (Candida tenuis (Yeast)).